The chain runs to 131 residues: Outer membrane protein assembly factor BamE (131 aa).

An N-terminal signal peptide occupies residues 1 to 16 (MRNLLLVAAVALSTAG). Cysteine 17 is lipidated: N-palmitoyl cysteine. The S-diacylglycerol cysteine moiety is linked to residue cysteine 17. Residues 112–131 (SAPKQFGRNLARDKKKQRGR) are disordered.

It belongs to the BamE family. In terms of assembly, part of the Bam complex.

It localises to the cell outer membrane. Part of the outer membrane protein assembly complex, which is involved in assembly and insertion of beta-barrel proteins into the outer membrane. In Xanthomonas campestris pv. campestris (strain ATCC 33913 / DSM 3586 / NCPPB 528 / LMG 568 / P 25), this protein is Outer membrane protein assembly factor BamE.